The primary structure comprises 191 residues: Putative endogenous retrovirus group K member 11-1 Env polyprotein (191 aa).

The segment at 1-191 (MPGAIDDHCP…DITLHPQGLV (191 aa)) is truncated surface protein.

This sequence belongs to the beta type-B retroviral envelope protein family. HERV class-II K(HML-8) env subfamily. As to expression, cerebellum and testis.

It is found in the virion. In terms of biological role, retroviral envelope proteins mediate receptor recognition and membrane fusion during early infection. Endogenous envelope proteins may have kept, lost or modified their original function during evolution. The chain is Putative endogenous retrovirus group K member 11-1 Env polyprotein (ERVK11-1) from Homo sapiens (Human).